Consider the following 224-residue polypeptide: 7-cyano-7-deazaguanine synthase (224 aa).

9-19 contacts ATP; it reads ISGGMDSTLCA. Positions 190, 198, 201, and 204 each coordinate Zn(2+).

The protein belongs to the QueC family. Zn(2+) is required as a cofactor.

It carries out the reaction 7-carboxy-7-deazaguanine + NH4(+) + ATP = 7-cyano-7-deazaguanine + ADP + phosphate + H2O + H(+). The protein operates within purine metabolism; 7-cyano-7-deazaguanine biosynthesis. Catalyzes the ATP-dependent conversion of 7-carboxy-7-deazaguanine (CDG) to 7-cyano-7-deazaguanine (preQ(0)). This is 7-cyano-7-deazaguanine synthase from Campylobacter jejuni (strain RM1221).